The primary structure comprises 492 residues: Glutamate--cysteine ligase A, chloroplastic (492 aa).

An intrachain disulfide couples Cys156 to Cys376.

This sequence belongs to the carboxylate-amine ligase family. Glutamate--cysteine ligase type 2 subfamily. As to quaternary structure, homodimer or monomer when oxidized or reduced, respectively. The Cys-156-Cys-376 disulfide bridge is known to modulate the enzyme activity according to the redox status. The oxidized form constitutes the active enzyme.

The protein resides in the plastid. It is found in the chloroplast. It catalyses the reaction L-cysteine + L-glutamate + ATP = gamma-L-glutamyl-L-cysteine + ADP + phosphate + H(+). The protein operates within sulfur metabolism; glutathione biosynthesis; glutathione from L-cysteine and L-glutamate: step 1/2. The protein is Glutamate--cysteine ligase A, chloroplastic (GSH1-1) of Oryza sativa subsp. indica (Rice).